A 405-amino-acid chain; its full sequence is Serine-type anaerobic sulfatase-maturating enzyme (405 aa).

Residues 18 to 249 enclose the Radical SAM core domain; the sequence is PRSPVPFHIL…QWRKRCDRGR (232 aa). Positions 35 and 39 each coordinate [4Fe-4S] cluster. S-adenosyl-L-methionine is bound at residue Tyr41. A [4Fe-4S] cluster-binding site is contributed by Cys42. Residues Gly84, Ser140, and Arg152 each coordinate S-adenosyl-L-methionine. The [4Fe-4S] cluster site is built by Cys270, Cys276, and Cys291. Asp292 functions as the Proton acceptor in the catalytic mechanism. Positions 331, 334, 340, 344, and 357 each coordinate [4Fe-4S] cluster.

Belongs to the radical SAM superfamily. Anaerobic sulfatase-maturating enzyme family. Monomer. Interacts with AtsA prior to its export to the periplasm. The cofactor is [4Fe-4S] cluster.

The protein resides in the cytoplasm. The enzyme catalyses L-seryl-[sulfatase] + S-adenosyl-L-methionine = 3-oxo-L-alanyl-[sulfatase] + 5'-deoxyadenosine + L-methionine + H(+). It participates in protein modification; sulfatase oxidation. Involved in 'Ser-type' sulfatase maturation under anaerobic conditions. Catalyzes the post-translational modification of serine ('Ser-72' in the arylsulfatase AtsA) into 3-oxoalanine (also known as C(alpha)-formylglycine (FGly)), by a free radical chemical mechanism initiated via the reductive cleavage of S-adenosyl-L-methionine (SAM). The protein is Serine-type anaerobic sulfatase-maturating enzyme of Klebsiella aerogenes (Enterobacter aerogenes).